A 326-amino-acid chain; its full sequence is Phospho-N-acetylmuramoyl-pentapeptide-transferase (326 aa).

A run of 9 helical transmembrane segments spans residues 3 to 23 (ISIS…PAFI), 51 to 71 (TMGG…VALF), 79 to 99 (VGMI…DDFL), 115 to 135 (LALQ…GGDM), 138 to 158 (VFGY…FWLV), 169 to 189 (GIDG…GVIA), 195 to 215 (MDIL…FVFN), 221 to 243 (VFMG…MALH), and 306 to 326 (FFFW…LYLM).

It belongs to the glycosyltransferase 4 family. MraY subfamily. The cofactor is Mg(2+).

It localises to the cell membrane. The catalysed reaction is UDP-N-acetyl-alpha-D-muramoyl-L-alanyl-gamma-D-glutamyl-L-lysyl-D-alanyl-D-alanine + di-trans,octa-cis-undecaprenyl phosphate = Mur2Ac(oyl-L-Ala-gamma-D-Glu-L-Lys-D-Ala-D-Ala)-di-trans,octa-cis-undecaprenyl diphosphate + UMP. The protein operates within cell wall biogenesis; peptidoglycan biosynthesis. Its function is as follows. Catalyzes the initial step of the lipid cycle reactions in the biosynthesis of the cell wall peptidoglycan: transfers peptidoglycan precursor phospho-MurNAc-pentapeptide from UDP-MurNAc-pentapeptide onto the lipid carrier undecaprenyl phosphate, yielding undecaprenyl-pyrophosphoryl-MurNAc-pentapeptide, known as lipid I. The protein is Phospho-N-acetylmuramoyl-pentapeptide-transferase of Streptococcus pneumoniae (strain Taiwan19F-14).